The chain runs to 507 residues: Proton-coupled zinc antiporter SLC30A1 (507 aa).

At methionine 1 to arginine 10 the chain is on the cytoplasmic side. Residues leucine 11 to valine 31 traverse the membrane as a helical segment. At threonine 32–leucine 35 the chain is on the extracellular side. The chain crosses the membrane as a helical span at residues alanine 36–valine 56. Residues histidine 43 and aspartate 47 each contribute to the Zn(2+) site. The Cytoplasmic portion of the chain corresponds to alanine 57 to glutamate 78. Residues valine 79–glutamate 99 traverse the membrane as a helical segment. Residues alanine 100–proline 113 are Extracellular-facing. A helical membrane pass occupies residues leucine 114–phenylalanine 134. Residues histidine 135 to valine 247 lie on the Cytoplasmic side of the membrane. Residues glutamate 140 to aspartate 218 form a disordered region. Positions glycine 145 to histidine 156 are 6 X 2 AA approximate repeats of H-G. Basic residues predominate over residues glycine 147–glycine 165. Polar residues predominate over residues threonine 188–glycine 200. Residues aspartate 204–aspartate 215 are compositionally biased toward basic and acidic residues. The helical transmembrane segment at phenylalanine 248 to phenylalanine 268 threads the bilayer. Zn(2+)-binding residues include histidine 250 and aspartate 254. Residues tyrosine 269–alanine 307 are Extracellular-facing. Residue asparagine 298 is glycosylated (N-linked (GlcNAc...) asparagine). The helical transmembrane segment at glycine 308–leucine 328 threads the bilayer. Over tyrosine 329–leucine 507 the chain is Cytoplasmic. Serine 506 carries the post-translational modification Phosphoserine.

This sequence belongs to the cation diffusion facilitator (CDF) transporter (TC 2.A.4) family. SLC30A subfamily. Homodimer. Interacts with TMEM163. Interacts and forms a complex with TMC6 and TMC8; the interaction regulates zinc transport into the ER. In terms of tissue distribution, widely expressed. Detected in duodenum and jejunum but not in ileum and colon (at protein level). Expressed by neuroglial cells (at protein level).

It is found in the cell membrane. The protein resides in the basolateral cell membrane. It localises to the cytoplasmic vesicle membrane. The protein localises to the cytoplasm. Its subcellular location is the endoplasmic reticulum membrane. It is found in the golgi apparatus membrane. The protein resides in the nucleus membrane. The catalysed reaction is Zn(2+)(in) + 2 H(+)(out) = Zn(2+)(out) + 2 H(+)(in). Calcium-dependent. Its function is as follows. Zinc ion:proton antiporter that could function at the plasma membrane mediating zinc efflux from cells against its electrochemical gradient protecting them from intracellular zinc accumulation and toxicity. Alternatively, could prevent the transport to the plasma membrane of CACNB2, the L-type calcium channels regulatory subunit, through a yet to be defined mechanism. By modulating the expression of these channels at the plasma membrane, could prevent calcium and zinc influx into cells. By the same mechanism, could also prevent L-type calcium channels-mediated heavy metal influx into cells. In some cells, could also function as a zinc ion:proton antiporter mediating zinc entry into the lumen of cytoplasmic vesicles. In macrophages, can increase zinc ions concentration into the lumen of cytoplasmic vesicles containing engulfed bacteria and could help inactivate them. Forms a complex with TMC6/EVER1 and TMC8/EVER2 at the ER membrane of keratynocytes which facilitates zinc uptake into the ER. Down-regulates the activity of transcription factors induced by zinc and cytokines. The polypeptide is Proton-coupled zinc antiporter SLC30A1 (Rattus norvegicus (Rat)).